The primary structure comprises 457 residues: Tryptophan aminotransferase-related protein 3 (457 aa).

The chain crosses the membrane as a helical span at residues Leu-6 to Asn-26. Pyridoxal 5'-phosphate contacts are provided by residues Tyr-123, Ala-163 to Thr-164, Asn-237, Asp-257 to Tyr-260, Ser-280 to Lys-283, and Arg-291. Position 283 is an N6-(pyridoxal phosphate)lysine (Lys-283).

This sequence belongs to the alliinase family. Requires pyridoxal 5'-phosphate as cofactor.

Its subcellular location is the membrane. Probable aminotransferase. This is Tryptophan aminotransferase-related protein 3 (TAR3) from Arabidopsis thaliana (Mouse-ear cress).